Here is a 1220-residue protein sequence, read N- to C-terminus: Plasma membrane calcium-transporting ATPase 1 (1220 aa).

The residue at position 2 (G2) is an N-acetylglycine. The Cytoplasmic segment spans residues 2–105 (GDMANNSVAY…KTFLQLVWEA (104 aa)). 2 positions are modified to phosphoserine: S8 and S17. The helical transmembrane segment at 106-126 (LQDVTLIILEIAAIVSLGLSF) threads the bilayer. At 127-154 (YQPPEGDNALCGEVSVGEEEGEGETGWI) the chain is on the extracellular side. Residues 155-175 (EGAAILLSVVCVVLVTAFNDW) form a helical membrane-spanning segment. The Cytoplasmic portion of the chain corresponds to 176–366 (SKEKQFRGLQ…KEKSVLQGKL (191 aa)). Residues 297–356 (EEEKKDEKKKEKKNKKQDGAIENRNKAKAQDGAAMEMQPLKSEEGGDGDEKDKKKANLPK) form a disordered region. Composition is skewed to basic and acidic residues over residues 312 to 325 (KQDG…KAKA) and 337 to 356 (KSEE…NLPK). A Phosphoserine modification is found at S338. The chain crosses the membrane as a helical span at residues 367 to 386 (TKLAVQIGKAGLLMSAITVI). Residues 387–418 (ILVLYFVIDTFWVQKRPWLAECTPIYIQYFVK) are Extracellular-facing. A helical membrane pass occupies residues 419–439 (FFIIGVTVLVVAVPEGLPLAV). Residues 440-855 (TISLAYSVKK…RNVYDSISKF (416 aa)) lie on the Cytoplasmic side of the membrane. D475 serves as the catalytic 4-aspartylphosphate intermediate. Mg(2+) contacts are provided by D475, T477, and D797. A helical transmembrane segment spans residues 856–876 (LQFQLTVNVVAVIVAFTGACI). At 877–882 (TQDSPL) the chain is on the extracellular side. Residues 883 to 903 (KAVQMLWVNLIMDTLASLALA) traverse the membrane as a helical segment. Residues 904–927 (TEPPTESLLLRKPYGRNKPLISRT) lie on the Cytoplasmic side of the membrane. The chain crosses the membrane as a helical span at residues 928–948 (MMKNILGHAFYQLVVVFTLLF). Residues 949 to 971 (AGEKFFDIDSGRNAPLHAPPSEH) lie on the Extracellular side of the membrane. A helical membrane pass occupies residues 972 to 991 (YTIVFNTFVLMQLFNEINAR). Residues 992–1005 (KIHGERNVFEGIFN) lie on the Cytoplasmic side of the membrane. The chain crosses the membrane as a helical span at residues 1006-1027 (NAIFCTIVLGTFVVQIIIVQFG). The Extracellular segment spans residues 1028-1039 (GKPFSCSELSIE). A helical membrane pass occupies residues 1040–1060 (QWLWSIFLGMGTLLWGQLIST). Topologically, residues 1061–1220 (IPTSRLKFLK…SPLHSLETSL (160 aa)) are cytoplasmic. Residues 1100–1117 (LRRGQILWFRGLNRIQTQ) form a calmodulin-binding subdomain A region. Phosphothreonine; by PKC is present on T1116. The segment at 1118 to 1220 (IRVVNAFRSS…SPLHSLETSL (103 aa)) is required for basolateral membrane targeting. Phosphoserine is present on residues S1140 and S1155. Residues 1160-1220 (PLIDDTDAED…SPLHSLETSL (61 aa)) are disordered. Residue T1165 is modified to Phosphothreonine. Phosphoserine is present on residues S1178 and S1182. The span at 1200 to 1220 (MNKSATSSSPGSPLHSLETSL) shows a compositional bias: polar residues.

It belongs to the cation transport ATPase (P-type) (TC 3.A.3) family. Type IIB subfamily. As to quaternary structure, monomer. Dimer. Oligomer. Calmodulin binding. Interacts with PDZD11. Interacts with SLC35G1 and STIM1. Interacts with YWHAE; interacts with the monomeric and dimeric forms of the YWHAE but prefer the monomer form; this interaction inhibits calcium-transporting ATPase activity. Interacts with NPTN; this interaction stabilizes ATP2B1 and increases ATPase activity; this interaction controls T cell calcium homeostasis following T cell activation. Interacts with EPB41; regulates small intestinal calcium absorption through regulation of membrane expression of ATP2B1. In terms of tissue distribution, expressed in the retina, with strongest expression in the outer plexiform layer and lower expression levels in the inner nuclear layer and the inner plexiform layer. Specifically expressed in the following retinal cell types: photoreceptor cells, cone bipolar cells and horizontal cells. Expressed in osteoclasts (at protein level). Expressed at highest levels in brain, intestine, kidney, and stomach, and at lower levels in liver, lung, aorta, portal vein, urinary bladder, diaphragm, seminal vesicles and testes. Expressed in small intestinal epithelium.

Its subcellular location is the cell membrane. The protein resides in the basolateral cell membrane. The protein localises to the synapse. It is found in the presynaptic cell membrane. It localises to the cytoplasmic vesicle. Its subcellular location is the secretory vesicle. The protein resides in the synaptic vesicle membrane. The catalysed reaction is Ca(2+)(in) + ATP + H2O = Ca(2+)(out) + ADP + phosphate + H(+). In terms of biological role, catalyzes the hydrolysis of ATP coupled with the transport of calcium from the cytoplasm to the extracellular space thereby maintaining intracellular calcium homeostasis. Plays a role in blood pressure regulation through regulation of intracellular calcium concentration and nitric oxide production leading to regulation of vascular smooth muscle cells vasoconstriction. Positively regulates bone mineralization through absorption of calcium from the intestine. Plays dual roles in osteoclast differentiation and survival by regulating RANKL-induced calcium oscillations in preosteoclasts and mediating calcium extrusion in mature osteoclasts. Regulates insulin sensitivity through calcium/calmodulin signaling pathway by regulating AKT1 activation and NOS3 activation in endothelial cells. May play a role in synaptic transmission by modulating calcium and proton dynamics at the synaptic vesicles. This Mus musculus (Mouse) protein is Plasma membrane calcium-transporting ATPase 1.